The chain runs to 131 residues: Profilin-1 (131 aa).

A disulfide bond links Cys-13 and Cys-115. The short motif at 81–97 (RVIRGKKGAGGITIKKT) is the Involved in PIP2 interaction element. Phosphothreonine is present on Thr-111.

The protein belongs to the profilin family. Occurs in many kinds of cells as a complex with monomeric actin in a 1:1 ratio.

The protein localises to the cytoplasm. It is found in the cytoskeleton. In terms of biological role, binds to actin and affects the structure of the cytoskeleton. At high concentrations, profilin prevents the polymerization of actin, whereas it enhances it at low concentrations. By binding to PIP2, it inhibits the formation of IP3 and DG. This chain is Profilin-1 (PRO1), found in Phleum pratense (Common timothy).